Consider the following 259-residue polypeptide: Zinc import ATP-binding protein ZnuC (259 aa).

The ABC transporter domain maps to 22 to 238 (VEARGLTVRR…PEYRALFGAH (217 aa)). 54–61 (GPNGSGKS) serves as a coordination point for ATP.

The protein belongs to the ABC transporter superfamily. Zinc importer (TC 3.A.1.15.5) family. In terms of assembly, the complex is composed of two ATP-binding proteins (ZnuC), two transmembrane proteins (ZnuB) and a solute-binding protein (ZnuA).

It is found in the cell inner membrane. The catalysed reaction is Zn(2+)(out) + ATP(in) + H2O(in) = Zn(2+)(in) + ADP(in) + phosphate(in) + H(+)(in). Part of the ABC transporter complex ZnuABC involved in zinc import. Responsible for energy coupling to the transport system. The sequence is that of Zinc import ATP-binding protein ZnuC from Alkalilimnicola ehrlichii (strain ATCC BAA-1101 / DSM 17681 / MLHE-1).